Consider the following 305-residue polypeptide: Elongation factor Ts, mitochondrial (305 aa).

Belongs to the EF-Ts family.

It is found in the mitochondrion. Associates with the EF-Tu.GDP complex and induces the exchange of GDP to GTP. It remains bound to the aminoacyl-tRNA.EF-Tu.GTP complex up to the GTP hydrolysis stage on the ribosome. This chain is Elongation factor Ts, mitochondrial (tsfm), found in Danio rerio (Zebrafish).